A 469-amino-acid polypeptide reads, in one-letter code: Mitochondrial adenyl nucleotide antiporter SLC25A25 (469 aa).

A regulatory N-terminal domain region spans residues 1–165 (MLCLCLYVPI…LYWKHSTIFD (165 aa)). At 1–189 (MLCLCLYVPI…ERQTGMWWRH (189 aa)) the chain is on the mitochondrial intermembrane side. EF-hand domains are found at residues 47 to 80 (TYRQ…QDHE), 78 to 113 (DHEK…LGVK), and 114 to 149 (ISEQ…HPVE). Aspartate 60, aspartate 62, aspartate 64, glutamine 66, and glutamate 71 together coordinate Ca(2+). The segment at 151–160 (IPEIILYWKH) is linker region. Positions 166–469 (VGENLTVPDE…LKITLGVQSR (304 aa)) are C-terminal transmembrane transporter domain. Solcar repeat units follow at residues 184 to 270 (GMWW…MKRL), 278 to 363 (LRIH…LKNT), and 375 to 463 (PGVF…LKIT). Residues 190-207 (LVAGGGAGAVSRTCTAPL) traverse the membrane as a helical segment. Residues 208 to 244 (DRLKVLMQVHASRSNNMCIVGGFTQMIREGGAKSLWR) are Mitochondrial matrix-facing. The helical transmembrane segment at 245-264 (GNGINVLKIAPESAIKFMAY) threads the bilayer. Topologically, residues 265-287 (EQMKRLVGSDQETLRIHERLVAG) are mitochondrial intermembrane. Residues 288-301 (SLAGAIAQSSIYPM) form a helical membrane-spanning segment. At 302-337 (EVLKTRMALRKTGQYSGMLDCARRILAKEGVAAFYK) the chain is on the mitochondrial matrix side. A helical transmembrane segment spans residues 338-357 (GYIPNMLGIIPYAGIDLAVY). Topologically, residues 358–380 (ETLKNTWLQRYAVNSADPGVFVL) are mitochondrial intermembrane. A helical transmembrane segment spans residues 381–398 (LACGTISSTCGQLASYPL). The Mitochondrial matrix portion of the chain corresponds to 399-437 (ALVRTRMQAQASIEGAPEVTMSSLFKQILRTEGAFGLYR). The chain crosses the membrane as a helical span at residues 438-457 (GLAPNFMKVIPAVSISYVVY). At 458 to 469 (ENLKITLGVQSR) the chain is on the mitochondrial intermembrane side.

The protein belongs to the mitochondrial carrier (TC 2.A.29) family.

Its subcellular location is the mitochondrion inner membrane. The enzyme catalyses Mg(2+)(out) + phosphate(in) + ATP(out) = Mg(2+)(in) + phosphate(out) + ATP(in). Its activity is regulated as follows. Activated by an increase in cytosolic calcium levels that induce a conformational change of the N-terminal regulatory domain, uncapping the channel and allowing transport. Functionally, electroneutral antiporter that most probably mediates the transport of adenyl nucleotides through the inner mitochondrial membrane. Originally identified as an ATP-magnesium/inorganic phosphate antiporter, it could have a broader specificity for adenyl nucleotides. By regulating the mitochondrial matrix adenyl nucleotide pool could adapt to changing cellular energetic demands and indirectly regulate adenyl nucleotide-dependent metabolic pathways. The polypeptide is Mitochondrial adenyl nucleotide antiporter SLC25A25 (Mus musculus (Mouse)).